Consider the following 107-residue polypeptide: Cell division protein FtsB (107 aa).

Over 1–3 the chain is Cytoplasmic; that stretch reads MGK. The chain crosses the membrane as a helical span at residues 4-21; that stretch reads LTLLLLILLGWLQYSLWL. The Periplasmic portion of the chain corresponds to 22-107; sequence GKNGVHDFVR…IPSTQNNAQQ (86 aa). Residues 39 to 62 adopt a coiled-coil conformation; the sequence is QEVNNGKLKARNDQLFAEIDDLNG.

The protein belongs to the FtsB family. As to quaternary structure, part of a complex composed of FtsB, FtsL and FtsQ.

It localises to the cell inner membrane. Its function is as follows. Essential cell division protein. May link together the upstream cell division proteins, which are predominantly cytoplasmic, with the downstream cell division proteins, which are predominantly periplasmic. This is Cell division protein FtsB from Yersinia enterocolitica serotype O:8 / biotype 1B (strain NCTC 13174 / 8081).